Reading from the N-terminus, the 149-residue chain is Large ribosomal subunit protein uL13 (149 aa).

The protein belongs to the universal ribosomal protein uL13 family. Part of the 50S ribosomal subunit.

In terms of biological role, this protein is one of the early assembly proteins of the 50S ribosomal subunit, although it is not seen to bind rRNA by itself. It is important during the early stages of 50S assembly. This is Large ribosomal subunit protein uL13 from Cyanothece sp. (strain PCC 7425 / ATCC 29141).